Consider the following 291-residue polypeptide: Bis(5'-nucleosyl)-tetraphosphatase, symmetrical (291 aa).

The protein belongs to the Ap4A hydrolase family.

The catalysed reaction is P(1),P(4)-bis(5'-adenosyl) tetraphosphate + H2O = 2 ADP + 2 H(+). Hydrolyzes diadenosine 5',5'''-P1,P4-tetraphosphate to yield ADP. The sequence is that of Bis(5'-nucleosyl)-tetraphosphatase, symmetrical from Coxiella burnetii (strain CbuG_Q212) (Coxiella burnetii (strain Q212)).